Reading from the N-terminus, the 395-residue chain is Flap endonuclease 1 (395 aa).

An N-domain region spans residues 1-104 (MGIKHLFQVI…GELAKRTARK (104 aa)). Asp34 lines the Mg(2+) pocket. DNA contacts are provided by Arg47 and Arg70. Position 86 (Asp86) interacts with Mg(2+). The segment at 102-121 (ARKAEATEAHEEAKETGTAE) is disordered. Residues 122 to 253 (DVEKFSRRTV…NTALKLIREH (132 aa)) are I-domain. Residues Glu158, Glu160, Asp179, and Asp181 each contribute to the Mg(2+) site. Glu158 provides a ligand contact to DNA. DNA is bound by residues Gly231 and Asp233. A Mg(2+)-binding site is contributed by Asp233. Positions 341–349 (QQSRLEGFF) are interaction with PCNA. A disordered region spans residues 348-395 (FFKPVARTDEEKASLKRKHDEKLQEQKKRKKEEAKAKKEAKAKPRGAA). The span at 353 to 389 (ARTDEEKASLKRKHDEKLQEQKKRKKEEAKAKKEAKA) shows a compositional bias: basic and acidic residues.

This sequence belongs to the XPG/RAD2 endonuclease family. FEN1 subfamily. Interacts with PCNA. Three molecules of fen1 bind to one PCNA trimer with each molecule binding to one PCNA monomer. PCNA stimulates the nuclease activity without altering cleavage specificity. Mg(2+) is required as a cofactor. Phosphorylated. Phosphorylation upon DNA damage induces relocalization to the nuclear plasma.

Its subcellular location is the nucleus. It is found in the nucleolus. The protein localises to the nucleoplasm. The protein resides in the mitochondrion. Functionally, structure-specific nuclease with 5'-flap endonuclease and 5'-3' exonuclease activities involved in DNA replication and repair. During DNA replication, cleaves the 5'-overhanging flap structure that is generated by displacement synthesis when DNA polymerase encounters the 5'-end of a downstream Okazaki fragment. It enters the flap from the 5'-end and then tracks to cleave the flap base, leaving a nick for ligation. Also involved in the long patch base excision repair (LP-BER) pathway, by cleaving within the apurinic/apyrimidinic (AP) site-terminated flap. Acts as a genome stabilization factor that prevents flaps from equilibrating into structures that lead to duplications and deletions. Also possesses 5'-3' exonuclease activity on nicked or gapped double-stranded DNA, and exhibits RNase H activity. Also involved in replication and repair of rDNA and in repairing mitochondrial DNA. The protein is Flap endonuclease 1 (fen1) of Aspergillus fumigatus (strain CBS 144.89 / FGSC A1163 / CEA10) (Neosartorya fumigata).